The following is a 999-amino-acid chain: uncharacterized protein (999 aa).

The span at Asn-45–Ser-128 shows a compositional bias: low complexity. The tract at residues Asn-45–Val-129 is disordered. Residues Tyr-723 to Gln-767 are a coiled coil. The segment covering Asn-873–Asn-887 has biased composition (low complexity). The segment at Asn-873–Asn-904 is disordered. A helical transmembrane segment spans residues Leu-976–Phe-996.

The protein resides in the membrane. This is an uncharacterized protein from Dictyostelium discoideum (Social amoeba).